We begin with the raw amino-acid sequence, 704 residues long: Elongation factor G 2 (704 aa).

The tr-type G domain maps to 8–290 (ERYRNIGISA…AIIDYLPSPV (283 aa)). Residues 17–24 (AHIDAGKT), 88–92 (DTPGH), and 142–145 (NKMD) each bind GTP.

This sequence belongs to the TRAFAC class translation factor GTPase superfamily. Classic translation factor GTPase family. EF-G/EF-2 subfamily.

The protein localises to the cytoplasm. Its function is as follows. Catalyzes the GTP-dependent ribosomal translocation step during translation elongation. During this step, the ribosome changes from the pre-translocational (PRE) to the post-translocational (POST) state as the newly formed A-site-bound peptidyl-tRNA and P-site-bound deacylated tRNA move to the P and E sites, respectively. Catalyzes the coordinated movement of the two tRNA molecules, the mRNA and conformational changes in the ribosome. The polypeptide is Elongation factor G 2 (Polaromonas sp. (strain JS666 / ATCC BAA-500)).